A 109-amino-acid polypeptide reads, in one-letter code: Somatostatin-2 (109 aa).

A signal peptide spans 1-16; it reads MQFLASLVSFLLVVWS. Positions 17-80 are excised as a propeptide; that stretch reads VKATALPVED…EPLENKLEER (64 aa). C98 and C109 form a disulfide bridge.

The protein belongs to the somatostatin family.

It is found in the secreted. In terms of biological role, somatostatin inhibits the release of somatotropin. The chain is Somatostatin-2 (sst2) from Protopterus annectens (African lungfish).